The primary structure comprises 409 residues: Outer membrane protein assembly factor BamB (409 aa).

Positions 1-34 (MAGNILLLILDYVFHAGSRTLRVCILSLLILLSG) are cleaved as a signal peptide. C35 carries the N-palmitoyl cysteine lipid modification. Residue C35 is the site of S-diacylglycerol cysteine attachment.

Belongs to the BamB family. Part of the Bam complex.

It localises to the cell outer membrane. Its function is as follows. Part of the outer membrane protein assembly complex, which is involved in assembly and insertion of beta-barrel proteins into the outer membrane. In Nitrosomonas eutropha (strain DSM 101675 / C91 / Nm57), this protein is Outer membrane protein assembly factor BamB.